The chain runs to 126 residues: Histone H2B type 1-J (126 aa).

Low complexity predominate over residues 1-12 (MPEPAKSAPAPK). The tract at residues 1–35 (MPEPAKSAPAPKKGSKKAVTKAQKKDGKKRKRSRK) is disordered. Position 2 is an N-acetylproline (Pro-2). The residue at position 3 (Glu-3) is an ADP-ribosyl glutamic acid. Lys-6 bears the N6-(2-hydroxyisobutyryl)lysine; alternate mark. Position 6 is an N6-(beta-hydroxybutyryl)lysine; alternate (Lys-6). Lys-6 is modified (N6-acetyllysine; alternate). Lys-6 is modified (N6-butyryllysine; alternate). Lys-6 carries the post-translational modification N6-crotonyllysine; alternate. Position 6 is an N6-lactoyllysine; alternate (Lys-6). Residue Lys-6 forms a Glycyl lysine isopeptide (Lys-Gly) (interchain with G-Cter in SUMO2); alternate linkage. An ADP-ribosylserine modification is found at Ser-7. Position 12 is an N6-(beta-hydroxybutyryl)lysine; alternate (Lys-12). Lys-12 and Lys-13 each carry N6-acetyllysine; alternate. N6-crotonyllysine; alternate occurs at positions 12 and 13. Lys-12 is subject to N6-lactoyllysine; alternate. Position 13 is an N6-(2-hydroxyisobutyryl)lysine; alternate (Lys-13). Ser-15 is modified (phosphoserine; by STK4/MST1). Lys-16, Lys-17, Lys-21, and Lys-24 each carry N6-acetyllysine; alternate. An N6-crotonyllysine; alternate mark is found at Lys-16, Lys-17, Lys-21, and Lys-24. N6-lactoyllysine; alternate occurs at positions 16, 17, 21, and 24. 2 positions are modified to N6-(beta-hydroxybutyryl)lysine; alternate: Lys-17 and Lys-21. Lys-17 is modified (N6-glutaryllysine; alternate). 2 positions are modified to N6-(2-hydroxyisobutyryl)lysine; alternate: Lys-21 and Lys-24. Lys-21 is subject to N6-butyryllysine; alternate. Lys-21 is covalently cross-linked (Glycyl lysine isopeptide (Lys-Gly) (interchain with G-Cter in SUMO2); alternate). N6-(2-hydroxyisobutyryl)lysine is present on Lys-25. Lys-35 is subject to N6-(2-hydroxyisobutyryl)lysine; alternate. The residue at position 35 (Lys-35) is an N6-(beta-hydroxybutyryl)lysine; alternate. Position 35 is an N6-crotonyllysine; alternate (Lys-35). The residue at position 35 (Lys-35) is an N6-glutaryllysine; alternate. An N6-succinyllysine; alternate modification is found at Lys-35. Residue Lys-35 forms a Glycyl lysine isopeptide (Lys-Gly) (interchain with G-Cter in ubiquitin); alternate linkage. Residue Glu-36 is modified to PolyADP-ribosyl glutamic acid. Ser-37 carries the phosphoserine; by AMPK modification. N6-(2-hydroxyisobutyryl)lysine; alternate is present on residues Lys-44, Lys-47, and Lys-58. Position 44 is an N6-lactoyllysine; alternate (Lys-44). N6-glutaryllysine; alternate is present on residues Lys-44 and Lys-47. Position 47 is an N6-methyllysine; alternate (Lys-47). Lys-58 is modified (N6,N6-dimethyllysine; alternate). Arg-80 is subject to Dimethylated arginine. Residue Lys-86 is modified to N6-(2-hydroxyisobutyryl)lysine; alternate. Lys-86 bears the N6-(beta-hydroxybutyryl)lysine; alternate mark. Residue Lys-86 is modified to N6-acetyllysine; alternate. The residue at position 86 (Lys-86) is an N6-lactoyllysine; alternate. Lys-86 carries the post-translational modification N6,N6,N6-trimethyllysine; alternate. Omega-N-methylarginine is present on residues Arg-87 and Arg-93. Residue Lys-109 is modified to N6-(2-hydroxyisobutyryl)lysine; alternate. Lys-109 is modified (N6-lactoyllysine; alternate). At Lys-109 the chain carries N6-glutaryllysine; alternate. Lys-109 is modified (N6-methyllysine; alternate). O-linked (GlcNAc) serine glycosylation is present at Ser-113. Phosphothreonine is present on Thr-116. Residues Lys-117 and Lys-121 each carry the N6-(2-hydroxyisobutyryl)lysine; alternate modification. Residues Lys-117 and Lys-121 each carry the N6-(beta-hydroxybutyryl)lysine; alternate modification. N6-lactoyllysine; alternate is present on residues Lys-117 and Lys-121. 2 positions are modified to N6-glutaryllysine; alternate: Lys-117 and Lys-121. N6-succinyllysine; alternate is present on residues Lys-117 and Lys-121. Residue Lys-117 is modified to N6-malonyllysine; alternate. Lys-117 is modified (N6-methylated lysine; alternate). Lys-121 participates in a covalent cross-link: Glycyl lysine isopeptide (Lys-Gly) (interchain with G-Cter in ubiquitin); alternate.

This sequence belongs to the histone H2B family. In terms of assembly, the nucleosome is a histone octamer containing two molecules each of H2A, H2B, H3 and H4 assembled in one H3-H4 heterotetramer and two H2A-H2B heterodimers. The octamer wraps approximately 147 bp of DNA. Heterodimer H2BC11 and H2AZ1 interacts with VPS72 (via N-terminal domain). Post-translationally, monoubiquitination at Lys-35 (H2BK34Ub) by the MSL1/MSL2 dimer is required for histone H3 'Lys-4' (H3K4me) and 'Lys-79' (H3K79me) methylation and transcription activation at specific gene loci, such as HOXA9 and MEIS1 loci. Similarly, monoubiquitination at Lys-121 (H2BK120Ub) by the RNF20/40 complex gives a specific tag for epigenetic transcriptional activation and is also prerequisite for histone H3 'Lys-4' and 'Lys-79' methylation. It also functions cooperatively with the FACT dimer to stimulate elongation by RNA polymerase II. H2BK120Ub also acts as a regulator of mRNA splicing: deubiquitination by USP49 is required for efficient cotranscriptional splicing of a large set of exons. Phosphorylation at Ser-37 (H2BS36ph) by AMPK in response to stress promotes transcription. Phosphorylated on Ser-15 (H2BS14ph) by STK4/MST1 during apoptosis; which facilitates apoptotic chromatin condensation. Also phosphorylated on Ser-15 in response to DNA double strand breaks (DSBs), and in correlation with somatic hypermutation and immunoglobulin class-switch recombination. In terms of processing, glcNAcylation at Ser-113 promotes monoubiquitination of Lys-121. It fluctuates in response to extracellular glucose, and associates with transcribed genes. Post-translationally, ADP-ribosylated by PARP1 or PARP2 on Ser-7 (H2BS6ADPr) in response to DNA damage. H2BS6ADPr promotes recruitment of CHD1L. Mono-ADP-ribosylated on Glu-3 (H2BE2ADPr) by PARP3 in response to single-strand breaks. Poly ADP-ribosylation on Glu-36 (H2BE35ADPr) by PARP1 regulates adipogenesis: it inhibits phosphorylation at Ser-37 (H2BS36ph), thereby blocking expression of pro-adipogenetic genes. Crotonylation (Kcr) is specifically present in male germ cells and marks testis-specific genes in post-meiotic cells, including X-linked genes that escape sex chromosome inactivation in haploid cells. Crotonylation marks active promoters and enhancers and confers resistance to transcriptional repressors. It is also associated with post-meiotically activated genes on autosomes. In terms of processing, lactylated in macrophages by EP300/P300 by using lactoyl-CoA directly derived from endogenous or exogenous lactate, leading to stimulates gene transcription.

The protein resides in the nucleus. It localises to the chromosome. Functionally, core component of nucleosome. Nucleosomes wrap and compact DNA into chromatin, limiting DNA accessibility to the cellular machineries which require DNA as a template. Histones thereby play a central role in transcription regulation, DNA repair, DNA replication and chromosomal stability. DNA accessibility is regulated via a complex set of post-translational modifications of histones, also called histone code, and nucleosome remodeling. In terms of biological role, has broad antibacterial activity. May contribute to the formation of the functional antimicrobial barrier of the colonic epithelium, and to the bactericidal activity of amniotic fluid. The protein is Histone H2B type 1-J of Homo sapiens (Human).